Reading from the N-terminus, the 883-residue chain is Phycobiliprotein ApcE (883 aa).

A (2R,3E)-phycocyanobilin-binding site is contributed by Cys181. PBS-linker domains follow at residues 238–418 (SLQG…FQKT), 488–669 (SARQ…KNEL), and 684–861 (RSIQ…KQTK).

This sequence belongs to the phycobilisome linker protein family. In terms of processing, contains one covalently linked bilin chromophore. This protein autochromophorylates (Potential).

The protein resides in the plastid. The protein localises to the cyanelle thylakoid membrane. This protein is postulated to act both as terminal energy acceptor and as a linker polypeptide that stabilizes the phycobilisome architecture. May have intrinsic bilin lyase activity. The protein is Phycobiliprotein ApcE (apcE) of Cyanophora paradoxa.